Here is a 258-residue protein sequence, read N- to C-terminus: Phosphonates import ATP-binding protein PhnC 1 (258 aa).

One can recognise an ABC transporter domain in the interval 2-246 (IEFKDVGLVY…TFEEIYGRSI (245 aa)). 35-42 (GLSGAGKS) contacts ATP.

It belongs to the ABC transporter superfamily. Phosphonates importer (TC 3.A.1.9.1) family. In terms of assembly, the complex is composed of two ATP-binding proteins (PhnC), two transmembrane proteins (PhnE) and a solute-binding protein (PhnD).

Its subcellular location is the cell membrane. The catalysed reaction is phosphonate(out) + ATP + H2O = phosphonate(in) + ADP + phosphate + H(+). Functionally, part of the ABC transporter complex PhnCDE involved in phosphonates import. Responsible for energy coupling to the transport system. The polypeptide is Phosphonates import ATP-binding protein PhnC 1 (Oceanobacillus iheyensis (strain DSM 14371 / CIP 107618 / JCM 11309 / KCTC 3954 / HTE831)).